The following is a 457-amino-acid chain: MDAQLNNLWEQALNIIKGEISEISFNTWIKSCTPISISDNILKLSVPNEFTKGILDTRYKDLLIQALKIVTSRKFKIEFYLESDLEEEKENEEKQKEEKKDNTNDVDGSIVVSDEMSATLNPKYTFQSFVIGNSNRFAHAASLAVAESPAKAYNPLFIYGGVGLGKTHLMHAIGHYILQENPKAKVVYVSSEKFTNELINAIKDDKNEEFRNKYRKVDVLLIDDIQFIAGKERTQEEFFHTFNALHEENKQIILSSDRPPKEIPTLEDRLRSRFEWGLIADIQPPDFETRMAILKKKADVEGLSVPNEVMVYIATKIKSNIRELEGALIRIIAYSSLTNRDVSVDLASEALKDIISNKESAPVTVKTIQESVANYYNLRIEDLKSQRRTRNIAYPRQIAMYLSRKLTDMSLPKIGEEFGGRDHTTVIHAYEKISENLKTDEGLQSMINDITKKLTQK.

Positions 1–75 (MDAQLNNLWE…ALKIVTSRKF (75 aa)) are domain I, interacts with DnaA modulators. The segment at 75–118 (FKIEFYLESDLEEEKENEEKQKEEKKDNTNDVDGSIVVSDEMSA) is domain II. Positions 87–108 (EEKENEEKQKEEKKDNTNDVDG) are disordered. The span at 91-103 (NEEKQKEEKKDNT) shows a compositional bias: basic and acidic residues. The tract at residues 119 to 335 (TLNPKYTFQS…GALIRIIAYS (217 aa)) is domain III, AAA+ region. ATP contacts are provided by glycine 163, glycine 165, lysine 166, and threonine 167. The tract at residues 336–457 (SLTNRDVSVD…NDITKKLTQK (122 aa)) is domain IV, binds dsDNA.

This sequence belongs to the DnaA family. In terms of assembly, oligomerizes as a right-handed, spiral filament on DNA at oriC.

The protein localises to the cytoplasm. In terms of biological role, plays an essential role in the initiation and regulation of chromosomal replication. ATP-DnaA binds to the origin of replication (oriC) to initiate formation of the DNA replication initiation complex once per cell cycle. Binds the DnaA box (a 9 base pair repeat at the origin) and separates the double-stranded (ds)DNA. Forms a right-handed helical filament on oriC DNA; dsDNA binds to the exterior of the filament while single-stranded (ss)DNA is stabiized in the filament's interior. The ATP-DnaA-oriC complex binds and stabilizes one strand of the AT-rich DNA unwinding element (DUE), permitting loading of DNA polymerase. After initiation quickly degrades to an ADP-DnaA complex that is not apt for DNA replication. Binds acidic phospholipids. The protein is Chromosomal replication initiator protein DnaA of Clostridium perfringens (strain SM101 / Type A).